Here is a 326-residue protein sequence, read N- to C-terminus: Protein TMED8 (326 aa).

The segment at 1 to 99 (MSDRQAAEGP…EGQAPGEQAA (99 aa)) is disordered. Residues 50 to 65 (SSPLASASDPAAESSP) are compositionally biased toward low complexity. A GOLD domain is found at 160–324 (PPCVWTFAKV…NKTLYFHIYY (165 aa)). An N6-acetyllysine modification is found at K170. The disordered stretch occupies residues 234–268 (VQVSDSSEDEEEEEDEEEEIEEPVPVGDVERGSRS). Residues 239 to 255 (SSEDEEEEEDEEEEIEE) are compositionally biased toward acidic residues.

This is Protein TMED8 (Tmed8) from Mus musculus (Mouse).